The chain runs to 505 residues: 11S globulin seed storage protein 1 (505 aa).

Residues 1–24 (MAKPILLSIYLCLIIVALFNGCLA) form the signal peptide. 2 disulfide bridges follow: C37–C70 and C113–C323. Residues 42–255 (LDALEPTNRI…AFNVDTETAR (214 aa)) enclose the Cupin type-1 1 domain. IgE-binding stretches follow at residues 118–132 (EESQ…RREF), 208–219 (EQHRRQQQHQQR), and 238–249 (FDAEFLADAFNV). A disordered region spans residues 193 to 232 (GNPDDEFRPQGQQEYEQHRRQQQHQQRRGEHGEQQRDLGN). Positions 219–228 (RRGEHGEQQR) are enriched in basic and acidic residues. The span at 282–316 (WSREEQEHEERKERERERESESERRQSRRGGRDDN) shows a compositional bias: basic and acidic residues. The segment at 282–318 (WSREEQEHEERKERERERESESERRQSRRGGRDDNGL) is disordered. The NGXEET; peptidase recognition motif signature appears at 316–321 (NGLEET). Positions 329 to 478 (ENIGDPSRAD…AFQIPREDAR (150 aa)) constitute a Cupin type-1 2 domain.

Belongs to the 11S seed storage protein (globulins) family. As to quaternary structure, homohexamer. Each subunit is composed of an acidic and a basic chain derived from a single precursor and linked by a disulfide bond. As to expression, expressed in seeds (at protein level). Expressed in seeds.

Its function is as follows. Seed storage protein. In Carya illinoinensis (Pecan), this protein is 11S globulin seed storage protein 1.